Reading from the N-terminus, the 181-residue chain is uncharacterized protein (181 aa).

Helical transmembrane passes span 3–23 (LSQT…VLIL), 67–87 (ALLL…GLSV), 92–112 (VLGV…VLFI), and 159–179 (MFIL…LWII).

The protein belongs to the YggT family.

It localises to the cell membrane. This is an uncharacterized protein from Haemophilus influenzae (strain ATCC 51907 / DSM 11121 / KW20 / Rd).